A 540-amino-acid chain; its full sequence is NADH-ubiquinone oxidoreductase chain 4 (540 aa).

The next 14 membrane-spanning stretches (helical) occupy residues 2–22, 35–55, 89–109, 118–138, 140–160, 172–192, 218–238, 248–268, 282–302, 310–330, 338–358, 376–396, 415–435, and 501–521; these read TIIA…GVIL, IFIL…LIGC, ISAI…LISI, QKFQ…FAAT, LVQL…MIGV, FQIL…IGIL, LIFI…PLHL, PTAG…YGYI, YFPI…IATL, IVAY…FSGV, IILM…IGVI, VMPI…AFPI, IIIA…SFWL, and VNIF…IIGM.

This sequence belongs to the complex I subunit 4 family.

It is found in the mitochondrion membrane. It carries out the reaction a ubiquinone + NADH + 5 H(+)(in) = a ubiquinol + NAD(+) + 4 H(+)(out). Functionally, core subunit of the mitochondrial membrane respiratory chain NADH dehydrogenase (Complex I) that is believed to belong to the minimal assembly required for catalysis. Complex I functions in the transfer of electrons from NADH to the respiratory chain. The immediate electron acceptor for the enzyme is believed to be ubiquinone. The polypeptide is NADH-ubiquinone oxidoreductase chain 4 (nad4) (Dictyostelium discoideum (Social amoeba)).